We begin with the raw amino-acid sequence, 757 residues long: Catalase-peroxidase (757 aa).

Positions 101 to 248 form a cross-link, tryptophyl-tyrosyl-methioninium (Trp-Tyr) (with M-274); the sequence is WHSAGTYRIG…LAAVQMGLIY (148 aa). Residue H102 is the Proton acceptor of the active site. A disordered region spans residues 213 to 232; it reads VHHPDEHRGAKEKASKNSDS. A cross-link (tryptophyl-tyrosyl-methioninium (Tyr-Met) (with W-101)) is located at residues 248-274; it reads YVNPEGPDGCPDPLASARDIRETFARM. H289 lines the heme b pocket.

The protein belongs to the peroxidase family. Peroxidase/catalase subfamily. In terms of assembly, homodimer or homotetramer. The cofactor is heme b. Formation of the three residue Trp-Tyr-Met cross-link is important for the catalase, but not the peroxidase activity of the enzyme.

It carries out the reaction H2O2 + AH2 = A + 2 H2O. The enzyme catalyses 2 H2O2 = O2 + 2 H2O. Its function is as follows. Bifunctional enzyme with both catalase and broad-spectrum peroxidase activity. The chain is Catalase-peroxidase from Xylella fastidiosa (strain M23).